A 169-amino-acid chain; its full sequence is uncharacterized protein (169 aa).

Ser-165 carries the post-translational modification Phosphoserine.

This is an uncharacterized protein from Drosophila melanogaster (Fruit fly).